We begin with the raw amino-acid sequence, 1072 residues long: Carbamoyl phosphate synthase large chain (1072 aa).

The interval 1–401 is carboxyphosphate synthetic domain; that stretch reads MPKYKDISKV…SLLKAVRSLE (401 aa). Residues R129, R169, G175, G176, K208, L210, E215, G241, V242, H243, Q284, and E298 each contribute to the ATP site. An ATP-grasp 1 domain is found at 133–327; it reads KRKMQEIGEP…IAKIAAKIAI (195 aa). Mg(2+) is bound by residues Q284, E298, and N300. Residues Q284, E298, and N300 each coordinate Mn(2+). An oligomerization domain region spans residues 402–544; that stretch reads IKAYGLRLDS…YIYSTYCEED (143 aa). A carbamoyl phosphate synthetic domain region spans residues 545-929; sequence EVETHDIPKV…ALYKALEGAG (385 aa). An ATP-grasp 2 domain is found at 671 to 861; the sequence is SKLLKELNIN…MVKLAVEVAL (191 aa). ATP contacts are provided by R707, K746, I748, E752, G777, V778, H779, S780, Q820, and E832. 3 residues coordinate Mg(2+): Q820, E832, and N834. Residues Q820, E832, and N834 each coordinate Mn(2+). The region spanning 930 to 1072 is the MGS-like domain; that stretch reads LKIPKKGKIL…QKDNVKNLVL (143 aa). Residues 930-1072 form an allosteric domain region; it reads LKIPKKGKIL…QKDNVKNLVL (143 aa).

This sequence belongs to the CarB family. Composed of two chains; the small (or glutamine) chain promotes the hydrolysis of glutamine to ammonia, which is used by the large (or ammonia) chain to synthesize carbamoyl phosphate. Tetramer of heterodimers (alpha,beta)4. The cofactor is Mg(2+). Mn(2+) is required as a cofactor.

It catalyses the reaction hydrogencarbonate + L-glutamine + 2 ATP + H2O = carbamoyl phosphate + L-glutamate + 2 ADP + phosphate + 2 H(+). The enzyme catalyses hydrogencarbonate + NH4(+) + 2 ATP = carbamoyl phosphate + 2 ADP + phosphate + 2 H(+). It participates in amino-acid biosynthesis; L-arginine biosynthesis; carbamoyl phosphate from bicarbonate: step 1/1. It functions in the pathway pyrimidine metabolism; UMP biosynthesis via de novo pathway; (S)-dihydroorotate from bicarbonate: step 1/3. In terms of biological role, large subunit of the glutamine-dependent carbamoyl phosphate synthetase (CPSase). CPSase catalyzes the formation of carbamoyl phosphate from the ammonia moiety of glutamine, carbonate, and phosphate donated by ATP, constituting the first step of 2 biosynthetic pathways, one leading to arginine and/or urea and the other to pyrimidine nucleotides. The large subunit (synthetase) binds the substrates ammonia (free or transferred from glutamine from the small subunit), hydrogencarbonate and ATP and carries out an ATP-coupled ligase reaction, activating hydrogencarbonate by forming carboxy phosphate which reacts with ammonia to form carbamoyl phosphate. The sequence is that of Carbamoyl phosphate synthase large chain from Caldanaerobacter subterraneus subsp. tengcongensis (strain DSM 15242 / JCM 11007 / NBRC 100824 / MB4) (Thermoanaerobacter tengcongensis).